Here is an 86-residue protein sequence, read N- to C-terminus: Large ribosomal subunit protein bL31 (86 aa).

The tract at residues 66–86 is disordered; sequence GMGSADSATSQETKEAKESDK. The span at 77 to 86 shows a compositional bias: basic and acidic residues; the sequence is ETKEAKESDK.

It belongs to the bacterial ribosomal protein bL31 family. Type A subfamily. In terms of assembly, part of the 50S ribosomal subunit.

Functionally, binds the 23S rRNA. In Prochlorococcus marinus (strain MIT 9515), this protein is Large ribosomal subunit protein bL31.